Reading from the N-terminus, the 621-residue chain is 1-deoxy-D-xylulose-5-phosphate synthase (621 aa).

Thiamine diphosphate is bound by residues His-76 and 117–119 (AHS). Asp-148 contributes to the Mg(2+) binding site. Thiamine diphosphate is bound by residues 149 to 150 (GA), Asn-178, Tyr-285, and Glu-367. Asn-178 provides a ligand contact to Mg(2+).

It belongs to the transketolase family. DXPS subfamily. Homodimer. It depends on Mg(2+) as a cofactor. Requires thiamine diphosphate as cofactor.

The enzyme catalyses D-glyceraldehyde 3-phosphate + pyruvate + H(+) = 1-deoxy-D-xylulose 5-phosphate + CO2. It functions in the pathway metabolic intermediate biosynthesis; 1-deoxy-D-xylulose 5-phosphate biosynthesis; 1-deoxy-D-xylulose 5-phosphate from D-glyceraldehyde 3-phosphate and pyruvate: step 1/1. In terms of biological role, catalyzes the acyloin condensation reaction between C atoms 2 and 3 of pyruvate and glyceraldehyde 3-phosphate to yield 1-deoxy-D-xylulose-5-phosphate (DXP). The chain is 1-deoxy-D-xylulose-5-phosphate synthase from Aromatoleum aromaticum (strain DSM 19018 / LMG 30748 / EbN1) (Azoarcus sp. (strain EbN1)).